Consider the following 528-residue polypeptide: J domain-containing protein APJ1 (528 aa).

Positions Asn4 to Thr73 constitute a J domain. Residues Gly193–Arg274 form a CR-type zinc finger. CXXCXGXG motif repeat units lie at residues Cys206–Gly213, Cys218–Gly225, Cys246–Gly253, and Cys262–Gly269. A compositionally biased stretch (basic and acidic residues) spans Asn485 to Glu499. The tract at residues Asn485–Tyr528 is disordered.

The protein localises to the cytoplasm. Its subcellular location is the nucleus. In terms of biological role, putative chaperone involved in protein folding. Interferes with propagation of [PSI+] prion when overproduced. This chain is J domain-containing protein APJ1 (APJ1), found in Saccharomyces cerevisiae (strain ATCC 204508 / S288c) (Baker's yeast).